The chain runs to 331 residues: DNA-directed RNA polymerase subunit alpha (331 aa).

The alpha N-terminal domain (alpha-NTD) stretch occupies residues 1 to 225 (MLDIAMPKLE…QYSSIIADFN (225 aa)). Residues 243-331 (PSEIYDMPIE…AARLNDGSAE (89 aa)) form an alpha C-terminal domain (alpha-CTD) region.

It belongs to the RNA polymerase alpha chain family. Homodimer. The RNAP catalytic core consists of 2 alpha, 1 beta, 1 beta' and 1 omega subunit. When a sigma factor is associated with the core the holoenzyme is formed, which can initiate transcription.

The catalysed reaction is RNA(n) + a ribonucleoside 5'-triphosphate = RNA(n+1) + diphosphate. DNA-dependent RNA polymerase catalyzes the transcription of DNA into RNA using the four ribonucleoside triphosphates as substrates. This Herpetosiphon aurantiacus (strain ATCC 23779 / DSM 785 / 114-95) protein is DNA-directed RNA polymerase subunit alpha.